The following is a 355-amino-acid chain: Phospho-N-acetylmuramoyl-pentapeptide-transferase (355 aa).

Helical transmembrane passes span 14–34 (PTGT…VVFF), 40–60 (LLIP…QVVP), 84–104 (GTPT…ALIW), 107–127 (FTPN…IGWL), 147–167 (LILQ…NQVS), 176–196 (LVIP…VAES), 205–225 (VDGL…IIIA), 227–247 (SHPD…GFIF), 268–290 (ALAA…GLFF), and 334–354 (TKIV…AIWS).

Belongs to the glycosyltransferase 4 family. MraY subfamily. Mg(2+) is required as a cofactor.

It is found in the cell inner membrane. The catalysed reaction is UDP-N-acetyl-alpha-D-muramoyl-L-alanyl-gamma-D-glutamyl-meso-2,6-diaminopimeloyl-D-alanyl-D-alanine + di-trans,octa-cis-undecaprenyl phosphate = di-trans,octa-cis-undecaprenyl diphospho-N-acetyl-alpha-D-muramoyl-L-alanyl-D-glutamyl-meso-2,6-diaminopimeloyl-D-alanyl-D-alanine + UMP. It functions in the pathway cell wall biogenesis; peptidoglycan biosynthesis. In terms of biological role, catalyzes the initial step of the lipid cycle reactions in the biosynthesis of the cell wall peptidoglycan: transfers peptidoglycan precursor phospho-MurNAc-pentapeptide from UDP-MurNAc-pentapeptide onto the lipid carrier undecaprenyl phosphate, yielding undecaprenyl-pyrophosphoryl-MurNAc-pentapeptide, known as lipid I. The chain is Phospho-N-acetylmuramoyl-pentapeptide-transferase from Microcystis aeruginosa (strain NIES-843 / IAM M-2473).